Reading from the N-terminus, the 275-residue chain is Polyamine aminopropyltransferase (275 aa).

The region spanning 2–235 (HLWFTEKQND…AMWSFTIGSK (234 aa)) is the PABS domain. Gln31 contributes to the S-methyl-5'-thioadenosine binding site. Residues His62 and Asp86 each contribute to the spermidine site. Residues Glu106 and 137–138 (DG) each bind S-methyl-5'-thioadenosine. Residue Asp155 is the Proton acceptor of the active site. 155 to 158 (DSTD) is a binding site for spermidine. Pro162 provides a ligand contact to S-methyl-5'-thioadenosine.

The protein belongs to the spermidine/spermine synthase family. Homodimer or homotetramer.

It is found in the cytoplasm. The catalysed reaction is S-adenosyl 3-(methylsulfanyl)propylamine + putrescine = S-methyl-5'-thioadenosine + spermidine + H(+). The protein operates within amine and polyamine biosynthesis; spermidine biosynthesis; spermidine from putrescine: step 1/1. Its function is as follows. Catalyzes the irreversible transfer of a propylamine group from the amino donor S-adenosylmethioninamine (decarboxy-AdoMet) to putrescine (1,4-diaminobutane) to yield spermidine. This is Polyamine aminopropyltransferase from Desulforudis audaxviator (strain MP104C).